The following is a 543-amino-acid chain: Chaperonin GroEL (543 aa).

Residues 29-32, 86-90, glycine 413, 477-479, and aspartate 493 each bind ATP; these read TLGP, DGTTT, and DAL.

The protein belongs to the chaperonin (HSP60) family. Forms a cylinder of 14 subunits composed of two heptameric rings stacked back-to-back. Interacts with the co-chaperonin GroES.

It localises to the cytoplasm. It catalyses the reaction ATP + H2O + a folded polypeptide = ADP + phosphate + an unfolded polypeptide.. Its function is as follows. Together with its co-chaperonin GroES, plays an essential role in assisting protein folding. The GroEL-GroES system forms a nano-cage that allows encapsulation of the non-native substrate proteins and provides a physical environment optimized to promote and accelerate protein folding. The polypeptide is Chaperonin GroEL (Clostridium botulinum).